We begin with the raw amino-acid sequence, 102 residues long: Aspartyl/glutamyl-tRNA(Asn/Gln) amidotransferase subunit C (102 aa).

It belongs to the GatC family. In terms of assembly, heterotrimer of A, B and C subunits.

It catalyses the reaction L-glutamyl-tRNA(Gln) + L-glutamine + ATP + H2O = L-glutaminyl-tRNA(Gln) + L-glutamate + ADP + phosphate + H(+). It carries out the reaction L-aspartyl-tRNA(Asn) + L-glutamine + ATP + H2O = L-asparaginyl-tRNA(Asn) + L-glutamate + ADP + phosphate + 2 H(+). Allows the formation of correctly charged Asn-tRNA(Asn) or Gln-tRNA(Gln) through the transamidation of misacylated Asp-tRNA(Asn) or Glu-tRNA(Gln) in organisms which lack either or both of asparaginyl-tRNA or glutaminyl-tRNA synthetases. The reaction takes place in the presence of glutamine and ATP through an activated phospho-Asp-tRNA(Asn) or phospho-Glu-tRNA(Gln). The protein is Aspartyl/glutamyl-tRNA(Asn/Gln) amidotransferase subunit C of Leuconostoc citreum (strain KM20).